Reading from the N-terminus, the 229-residue chain is Enolase-phosphatase E1 (229 aa).

Belongs to the HAD-like hydrolase superfamily. MasA/MtnC family. Monomer. It depends on Mg(2+) as a cofactor.

It catalyses the reaction 5-methylsulfanyl-2,3-dioxopentyl phosphate + H2O = 1,2-dihydroxy-5-(methylsulfanyl)pent-1-en-3-one + phosphate. It participates in amino-acid biosynthesis; L-methionine biosynthesis via salvage pathway; L-methionine from S-methyl-5-thio-alpha-D-ribose 1-phosphate: step 3/6. Its pathway is amino-acid biosynthesis; L-methionine biosynthesis via salvage pathway; L-methionine from S-methyl-5-thio-alpha-D-ribose 1-phosphate: step 4/6. Its function is as follows. Bifunctional enzyme that catalyzes the enolization of 2,3-diketo-5-methylthiopentyl-1-phosphate (DK-MTP-1-P) into the intermediate 2-hydroxy-3-keto-5-methylthiopentenyl-1-phosphate (HK-MTPenyl-1-P), which is then dephosphorylated to form the acireductone 1,2-dihydroxy-3-keto-5-methylthiopentene (DHK-MTPene). This Yersinia pseudotuberculosis serotype IB (strain PB1/+) protein is Enolase-phosphatase E1.